The chain runs to 260 residues: Purine nucleoside phosphorylase PD_1754 (260 aa).

Zn(2+) contacts are provided by H79, C120, and H137.

The protein belongs to the purine nucleoside phosphorylase YfiH/LACC1 family. As to quaternary structure, homodimer. Requires Cu(2+) as cofactor. The cofactor is Zn(2+).

The catalysed reaction is adenosine + phosphate = alpha-D-ribose 1-phosphate + adenine. It catalyses the reaction S-methyl-5'-thioadenosine + phosphate = 5-(methylsulfanyl)-alpha-D-ribose 1-phosphate + adenine. It carries out the reaction inosine + phosphate = alpha-D-ribose 1-phosphate + hypoxanthine. The enzyme catalyses adenosine + H2O + H(+) = inosine + NH4(+). Functionally, purine nucleoside enzyme that catalyzes the phosphorolysis of adenosine and inosine nucleosides, yielding D-ribose 1-phosphate and the respective free bases, adenine and hypoxanthine. Also catalyzes the phosphorolysis of S-methyl-5'-thioadenosine into adenine and S-methyl-5-thio-alpha-D-ribose 1-phosphate. Also has adenosine deaminase activity. In Xylella fastidiosa (strain Temecula1 / ATCC 700964), this protein is Purine nucleoside phosphorylase PD_1754.